Here is a 348-residue protein sequence, read N- to C-terminus: NAC domain-containing protein 101 (348 aa).

Residues 7 to 156 form the NAC domain; sequence IPPGYRFHPT…GWVVCRAFKK (150 aa). The DNA-binding element occupies 107 to 162; it reads VGMRKTLVFYKGRAPNGQKSDWIMHEYRLETDENGPPHEEGWVVCRAFKKKLTTMN. The tract at residues 325–348 is disordered; sequence MVSMNASSSSSPCSFYSWAQNTHT. Positions 327-341 are enriched in low complexity; sequence SMNASSSSSPCSFYS.

The protein belongs to the plant vascular related NAC-domain protein family. Homodimer. As to expression, expressed in root inner metaxylem vessels and in hypocotyl vessels. Present in root developing xylems. Accumulates in the xylem but not in interfascicular fibers or pith cells in inflorescence stems. Absent from secondary xylem in roots.

Its subcellular location is the nucleus. In terms of biological role, transcription activator that binds to the secondary wall NAC binding element (SNBE), 5'-(T/A)NN(C/T)(T/C/G)TNNNNNNNA(A/C)GN(A/C/T)(A/T)-3', and to the tracheary elements (TE) specific regulating cis-element (TERE), 5'-CTTNAAAGCNA-3', in the promoter of target genes (e.g. genes involved in secondary wall biosynthesis, cell wall modification such as xylan accumulation, and programmed cell death). Involved in xylem formation in roots and shoots, especially regulating metaxylem vessel differentiation by promoting immature xylem vessel-specific genes expression, especially genes regulating programmed cell death (PCD) and secondary wall formation in tracheary elements (TE). Can activate MYB25, MYB46, MYB58, MYB63, MYB83, MYB103, CESA4, LBD15, LBD30, ERF115, XCP1, XCP2, NAC010/SND3, KNAT7, ASL19 and ASL20 expression. This chain is NAC domain-containing protein 101, found in Arabidopsis thaliana (Mouse-ear cress).